The primary structure comprises 239 residues: Type III pantothenate kinase (239 aa).

ATP is bound at residue 6–13 (DAGNTRLK). Substrate-binding positions include Y87 and 94–97 (GADR). D96 acts as the Proton acceptor in catalysis. T119 is an ATP binding site. Substrate is bound at residue S169.

Belongs to the type III pantothenate kinase family. As to quaternary structure, homodimer. The cofactor is NH4(+). K(+) is required as a cofactor.

The protein localises to the cytoplasm. It catalyses the reaction (R)-pantothenate + ATP = (R)-4'-phosphopantothenate + ADP + H(+). The protein operates within cofactor biosynthesis; coenzyme A biosynthesis; CoA from (R)-pantothenate: step 1/5. In terms of biological role, catalyzes the phosphorylation of pantothenate (Pan), the first step in CoA biosynthesis. The polypeptide is Type III pantothenate kinase (Laribacter hongkongensis (strain HLHK9)).